A 374-amino-acid chain; its full sequence is Putative G-protein coupled receptor-like protein B0244.6 (374 aa).

Residues 1-54 (MTQNHYTTSIFANCSKHYEFEILLETCTNSTNPCHAVSQIQSAITIAYVDYYTS) are Extracellular-facing. Residues 55–75 (VALFSIAALLDIYCLIITIPL) traverse the membrane as a helical segment. Residues 76–86 (YRRMKDDSKKK) lie on the Cytoplasmic side of the membrane. The helical transmembrane segment at 87–107 (YVFLITRCISGLLLVVAWLLI) threads the bilayer. Residues 108–137 (QCIYLRFIAPSQDNLPYYVLALALNIGSTY) are Extracellular-facing. A helical membrane pass occupies residues 138-158 (VLLGSYVGMAGILYLGVLNPI). Over 159–169 (AFNQHLTLRIV) the chain is Cytoplasmic. Residues 170 to 190 (YIAVCIIFVISIFISIPLAIF) traverse the membrane as a helical segment. Residues 191-216 (QALMTVPTSSMSCTDTACAPLITLIN) lie on the Extracellular side of the membrane. Residues 217 to 237 (FVLVFGSLITTTLTLTFVLIS) traverse the membrane as a helical segment. At 238 to 262 (LCRHRKEFKKLDTTSNTSLNSAVRL) the chain is on the cytoplasmic side. The helical transmembrane segment at 263-283 (LKFTLFAVLLLVAAEVIPFVI) threads the bilayer. Residues 284–304 (SETKKKHSVVTGCYYFYHSGK) lie on the Extracellular side of the membrane. The helical transmembrane segment at 305–325 (VIQYAVFALTESSIWSIALII) threads the bilayer. Residues 326-374 (DPLINIIFDRTVSKKATDQVKWMRKSCVGLVRKVTKRSNPENFTETSEI) lie on the Cytoplasmic side of the membrane.

The protein belongs to the G-protein coupled receptor 1 family. B0244 subfamily.

It localises to the cell membrane. The polypeptide is Putative G-protein coupled receptor-like protein B0244.6 (Caenorhabditis elegans).